A 308-amino-acid chain; its full sequence is Putative ankyrin repeat protein R835 (308 aa).

6 ANK repeats span residues 100 to 129, 152 to 181, 190 to 217, 218 to 247, 249 to 277, and 279 to 305; these read DINE…NIDL, PMNK…YVDF, SEYT…GANY, KSSY…DLEK, GLRS…EIDY, and YYIY…SKQI.

In Acanthamoeba polyphaga (Amoeba), this protein is Putative ankyrin repeat protein R835.